A 357-amino-acid polypeptide reads, in one-letter code: tRNA N6-adenosine threonylcarbamoyltransferase (357 aa).

Fe cation is bound by residues His-113 and His-117. Residues Leu-136 to Gly-140, Asp-169, Gly-182, and Asn-288 each bind substrate. Asp-316 lines the Fe cation pocket.

Belongs to the KAE1 / TsaD family. Fe(2+) is required as a cofactor.

It localises to the cytoplasm. It catalyses the reaction L-threonylcarbamoyladenylate + adenosine(37) in tRNA = N(6)-L-threonylcarbamoyladenosine(37) in tRNA + AMP + H(+). Its function is as follows. Required for the formation of a threonylcarbamoyl group on adenosine at position 37 (t(6)A37) in tRNAs that read codons beginning with adenine. Is involved in the transfer of the threonylcarbamoyl moiety of threonylcarbamoyl-AMP (TC-AMP) to the N6 group of A37, together with TsaE and TsaB. TsaD likely plays a direct catalytic role in this reaction. The sequence is that of tRNA N6-adenosine threonylcarbamoyltransferase from Gemmatimonas aurantiaca (strain DSM 14586 / JCM 11422 / NBRC 100505 / T-27).